The sequence spans 512 residues: Cytochrome P450 26B1 (512 aa).

Cysteine 441 is a heme binding site.

It belongs to the cytochrome P450 family. Requires heme as cofactor.

It localises to the endoplasmic reticulum membrane. It is found in the microsome membrane. It catalyses the reaction all-trans-retinoate + reduced [NADPH--hemoprotein reductase] + O2 = all-trans-4-hydroxyretinoate + oxidized [NADPH--hemoprotein reductase] + H2O + H(+). The enzyme catalyses all-trans-retinoate + reduced [NADPH--hemoprotein reductase] + O2 = all-trans-18-hydroxyretinoate + oxidized [NADPH--hemoprotein reductase] + H2O + H(+). In terms of biological role, a cytochrome P450 monooxygenase involved in the metabolism of retinoates (RAs), the active metabolites of vitamin A, and critical signaling molecules in animals. RAs exist as at least four different isomers: all-trans-RA (atRA), 9-cis-RA, 13-cis-RA, and 9,13-dicis-RA, where atRA is considered to be the biologically active isomer, although 9-cis-RA and 13-cis-RA also have activity. Catalyzes the hydroxylation of atRA primarily at C-4 and C-18, thereby contributing to the regulation of atRA homeostasis and signaling. Hydroxylation of atRA limits its biological activity and initiates a degradative process leading to its eventual elimination. Involved in the convertion of atRA to all-trans-4-oxo-RA. Can oxidize all-trans-13,14-dihydroretinoate (DRA) to metabolites which could include all-trans-4-oxo-DRA, all-trans-4-hydroxy-DRA, all-trans-5,8-epoxy-DRA, and all-trans-18-hydroxy-DRA. Shows preference for the following substrates: atRA &gt; 9-cis-RA &gt; 13-cis-RA. Plays a central role in germ cell development: acts by degrading RAs in the developing testis, preventing STRA8 expression, thereby leading to delay of meiosis. Required for the maintenance of the undifferentiated state of male germ cells during embryonic development in Sertoli cells, inducing arrest in G0 phase of the cell cycle and preventing meiotic entry. Plays a role in skeletal development, both at the level of patterning and in the ossification of bone and the establishment of some synovial joints. Essential for postnatal survival. Also has a significant activity in oxidation of tazarotenic acid and may therefore metabolize that xenobiotic in vivo. This is Cytochrome P450 26B1 (Cyp26b1) from Rattus norvegicus (Rat).